The following is a 211-amino-acid chain: Thymidylate kinase (211 aa).

Gly11–Thr18 serves as a coordination point for ATP.

This sequence belongs to the thymidylate kinase family.

The catalysed reaction is dTMP + ATP = dTDP + ADP. Its function is as follows. Phosphorylation of dTMP to form dTDP in both de novo and salvage pathways of dTTP synthesis. The protein is Thymidylate kinase of Streptococcus equi subsp. equi (strain 4047).